Consider the following 307-residue polypeptide: 4-hydroxy-3-methylbut-2-enyl diphosphate reductase (307 aa).

A [4Fe-4S] cluster-binding site is contributed by Cys-12. (2E)-4-hydroxy-3-methylbut-2-enyl diphosphate contacts are provided by His-41 and His-74. Dimethylallyl diphosphate contacts are provided by His-41 and His-74. His-41 and His-74 together coordinate isopentenyl diphosphate. Cys-96 contacts [4Fe-4S] cluster. Residue His-124 coordinates (2E)-4-hydroxy-3-methylbut-2-enyl diphosphate. His-124 lines the dimethylallyl diphosphate pocket. An isopentenyl diphosphate-binding site is contributed by His-124. Catalysis depends on Glu-126, which acts as the Proton donor. (2E)-4-hydroxy-3-methylbut-2-enyl diphosphate is bound at residue Thr-165. A [4Fe-4S] cluster-binding site is contributed by Cys-195. Ser-223, Ser-224, Asn-225, and Ser-267 together coordinate (2E)-4-hydroxy-3-methylbut-2-enyl diphosphate. Residues Ser-223, Ser-224, Asn-225, and Ser-267 each coordinate dimethylallyl diphosphate. 4 residues coordinate isopentenyl diphosphate: Ser-223, Ser-224, Asn-225, and Ser-267.

It belongs to the IspH family. [4Fe-4S] cluster serves as cofactor.

The enzyme catalyses isopentenyl diphosphate + 2 oxidized [2Fe-2S]-[ferredoxin] + H2O = (2E)-4-hydroxy-3-methylbut-2-enyl diphosphate + 2 reduced [2Fe-2S]-[ferredoxin] + 2 H(+). The catalysed reaction is dimethylallyl diphosphate + 2 oxidized [2Fe-2S]-[ferredoxin] + H2O = (2E)-4-hydroxy-3-methylbut-2-enyl diphosphate + 2 reduced [2Fe-2S]-[ferredoxin] + 2 H(+). Its pathway is isoprenoid biosynthesis; dimethylallyl diphosphate biosynthesis; dimethylallyl diphosphate from (2E)-4-hydroxy-3-methylbutenyl diphosphate: step 1/1. It functions in the pathway isoprenoid biosynthesis; isopentenyl diphosphate biosynthesis via DXP pathway; isopentenyl diphosphate from 1-deoxy-D-xylulose 5-phosphate: step 6/6. Its function is as follows. Catalyzes the conversion of 1-hydroxy-2-methyl-2-(E)-butenyl 4-diphosphate (HMBPP) into a mixture of isopentenyl diphosphate (IPP) and dimethylallyl diphosphate (DMAPP). Acts in the terminal step of the DOXP/MEP pathway for isoprenoid precursor biosynthesis. The sequence is that of 4-hydroxy-3-methylbut-2-enyl diphosphate reductase from Magnetococcus marinus (strain ATCC BAA-1437 / JCM 17883 / MC-1).